The sequence spans 148 residues: 3-hydroxyacyl-[acyl-carrier-protein] dehydratase FabZ (148 aa).

His48 is an active-site residue.

Belongs to the thioester dehydratase family. FabZ subfamily.

It is found in the cytoplasm. The catalysed reaction is a (3R)-hydroxyacyl-[ACP] = a (2E)-enoyl-[ACP] + H2O. Its function is as follows. Involved in unsaturated fatty acids biosynthesis. Catalyzes the dehydration of short chain beta-hydroxyacyl-ACPs and long chain saturated and unsaturated beta-hydroxyacyl-ACPs. The polypeptide is 3-hydroxyacyl-[acyl-carrier-protein] dehydratase FabZ (Nitratiruptor sp. (strain SB155-2)).